A 387-amino-acid chain; its full sequence is LL-diaminopimelate aminotransferase (387 aa).

Positions 14 and 39 each coordinate substrate. Residues Tyr68, 102-103, Tyr127, Asn177, Tyr208, and 236-238 contribute to the pyridoxal 5'-phosphate site; these read SK and SLS. Residues Lys103, Tyr127, and Asn177 each coordinate substrate. At Lys239 the chain carries N6-(pyridoxal phosphate)lysine. A pyridoxal 5'-phosphate-binding site is contributed by Arg247. A substrate-binding site is contributed by Arg365.

This sequence belongs to the class-I pyridoxal-phosphate-dependent aminotransferase family. LL-diaminopimelate aminotransferase subfamily. In terms of assembly, homodimer. The cofactor is pyridoxal 5'-phosphate.

The enzyme catalyses (2S,6S)-2,6-diaminopimelate + 2-oxoglutarate = (S)-2,3,4,5-tetrahydrodipicolinate + L-glutamate + H2O + H(+). It functions in the pathway amino-acid biosynthesis; L-lysine biosynthesis via DAP pathway; LL-2,6-diaminopimelate from (S)-tetrahydrodipicolinate (aminotransferase route): step 1/1. Functionally, involved in the synthesis of meso-diaminopimelate (m-DAP or DL-DAP), required for both lysine and peptidoglycan biosynthesis. Catalyzes the direct conversion of tetrahydrodipicolinate to LL-diaminopimelate. The polypeptide is LL-diaminopimelate aminotransferase (Aquifex aeolicus (strain VF5)).